The chain runs to 319 residues: tRNA-cytidine(32) 2-sulfurtransferase (319 aa).

The PP-loop motif signature appears at 49–54 (SGGKDS). Positions 124, 127, and 215 each coordinate [4Fe-4S] cluster. The segment at 276–319 (DGDTAFDKEEFRDPAPDADDVEDAPKKRTISILDSRGKESGCGA) is disordered. Composition is skewed to basic and acidic residues over residues 280 to 290 (AFDKEEFRDPA) and 310 to 319 (SRGKESGCGA).

The protein belongs to the TtcA family. In terms of assembly, homodimer. Requires Mg(2+) as cofactor. The cofactor is [4Fe-4S] cluster.

Its subcellular location is the cytoplasm. It carries out the reaction cytidine(32) in tRNA + S-sulfanyl-L-cysteinyl-[cysteine desulfurase] + AH2 + ATP = 2-thiocytidine(32) in tRNA + L-cysteinyl-[cysteine desulfurase] + A + AMP + diphosphate + H(+). Its pathway is tRNA modification. Functionally, catalyzes the ATP-dependent 2-thiolation of cytidine in position 32 of tRNA, to form 2-thiocytidine (s(2)C32). The sulfur atoms are provided by the cysteine/cysteine desulfurase (IscS) system. In Chromobacterium violaceum (strain ATCC 12472 / DSM 30191 / JCM 1249 / CCUG 213 / NBRC 12614 / NCIMB 9131 / NCTC 9757 / MK), this protein is tRNA-cytidine(32) 2-sulfurtransferase.